Reading from the N-terminus, the 214-residue chain is Phosphatidylserine decarboxylase proenzyme (214 aa).

The active-site Schiff-base intermediate with substrate; via pyruvic acid is S182. A Pyruvic acid (Ser); by autocatalysis modification is found at S182.

It belongs to the phosphatidylserine decarboxylase family. PSD-A subfamily. In terms of assembly, heterodimer of a large membrane-associated beta subunit and a small pyruvoyl-containing alpha subunit. The cofactor is pyruvate. In terms of processing, is synthesized initially as an inactive proenzyme. Formation of the active enzyme involves a self-maturation process in which the active site pyruvoyl group is generated from an internal serine residue via an autocatalytic post-translational modification. Two non-identical subunits are generated from the proenzyme in this reaction, and the pyruvate is formed at the N-terminus of the alpha chain, which is derived from the carboxyl end of the proenzyme. The post-translation cleavage follows an unusual pathway, termed non-hydrolytic serinolysis, in which the side chain hydroxyl group of the serine supplies its oxygen atom to form the C-terminus of the beta chain, while the remainder of the serine residue undergoes an oxidative deamination to produce ammonia and the pyruvoyl prosthetic group on the alpha chain.

It localises to the cell membrane. The catalysed reaction is a 1,2-diacyl-sn-glycero-3-phospho-L-serine + H(+) = a 1,2-diacyl-sn-glycero-3-phosphoethanolamine + CO2. It participates in phospholipid metabolism; phosphatidylethanolamine biosynthesis; phosphatidylethanolamine from CDP-diacylglycerol: step 2/2. Catalyzes the formation of phosphatidylethanolamine (PtdEtn) from phosphatidylserine (PtdSer). The sequence is that of Phosphatidylserine decarboxylase proenzyme from Burkholderia vietnamiensis (strain G4 / LMG 22486) (Burkholderia cepacia (strain R1808)).